Here is a 208-residue protein sequence, read N- to C-terminus: FMN-dependent NADH:quinone oxidoreductase (208 aa).

Residues Ser-17–Ser-19, Met-99–Leu-102, and Ser-143–Gly-146 contribute to the FMN site.

It belongs to the azoreductase type 1 family. As to quaternary structure, homodimer. FMN serves as cofactor.

It catalyses the reaction 2 a quinone + NADH + H(+) = 2 a 1,4-benzosemiquinone + NAD(+). The enzyme catalyses N,N-dimethyl-1,4-phenylenediamine + anthranilate + 2 NAD(+) = 2-(4-dimethylaminophenyl)diazenylbenzoate + 2 NADH + 2 H(+). In terms of biological role, quinone reductase that provides resistance to thiol-specific stress caused by electrophilic quinones. Functionally, also exhibits azoreductase activity. Catalyzes the reductive cleavage of the azo bond in aromatic azo compounds to the corresponding amines. This is FMN-dependent NADH:quinone oxidoreductase from Staphylococcus aureus (strain Mu50 / ATCC 700699).